Consider the following 606-residue polypeptide: UvrABC system protein C (606 aa).

Residues 19-97 enclose the GIY-YIG domain; sequence QSCGVYQMIG…IKSLKPPYNI (79 aa). Residues 207 to 242 enclose the UVR domain; it reads EKVKKQLSSTMEKCSKEENYELAAIYRDRLKFLEQI.

The protein belongs to the UvrC family. As to quaternary structure, interacts with UvrB in an incision complex.

The protein localises to the cytoplasm. The UvrABC repair system catalyzes the recognition and processing of DNA lesions. UvrC both incises the 5' and 3' sides of the lesion. The N-terminal half is responsible for the 3' incision and the C-terminal half is responsible for the 5' incision. This Wolbachia sp. subsp. Brugia malayi (strain TRS) protein is UvrABC system protein C.